The following is a 342-amino-acid chain: Prenyl transferase penC (342 aa).

The helical transmembrane segment at leucine 17–isoleucine 37 threads the bilayer. Histidine 110 is a binding site for isopentenyl diphosphate. Mg(2+) is bound by residues aspartate 117 and aspartate 121. Arginine 126 lines the dimethylallyl diphosphate pocket. An N-linked (GlcNAc...) asparagine glycan is attached at asparagine 154. Residue lysine 210 participates in dimethylallyl diphosphate binding.

It belongs to the FPP/GGPP synthase family.

The protein localises to the membrane. Its pathway is secondary metabolite biosynthesis. Functionally, prenyl transferase; part of the gene cluster that mediates the biosynthesis of the indole diterpenes penitrems. The geranylgeranyl diphosphate (GGPP) synthase penG catalyzes the first step in penitrem biosynthesis via conversion of farnesyl pyrophosphate and isopentyl pyrophosphate into geranylgeranyl pyrophosphate (GGPP). Condensation of indole-3-glycerol phosphate with GGPP by the prenyl transferase penC then forms 3-geranylgeranylindole (3-GGI). Epoxidation by the FAD-dependent monooxygenase penM leads to a epoxidized-GGI that is substrate of the terpene cyclase penB for cyclization to yield paspaline. Paspaline is subsequently converted to 13-desoxypaxilline by the cytochrome P450 monooxygenase penP, the latter being then converted to paxilline by the cytochrome P450 monooxygenase penQ. Paxilline is converted to beta-paxitriol via C-10 ketoreduction by the short-chain dehydrogenase PC-15 which can be monoprenylated at the C-20 by the indole diterpene prenyltransferase penD. A two-step elimination (acetylation and elimination) process performed by the O-acetyltransferase PC-16 and the P.simplicissimum ptmI-ortholog not yet identified in P.crustosum, leads to the production of the prenylated form of penijanthine. The FAD-linked oxidoreductase ptmO then converts the prenylated form of penijanthine into PC-M5 which is in turn transformed into PC-M4 by the aromatic dimethylallyltransferase PC-22. A series of oxidation steps involving 4 cytochrome P450 monooxygenases (PC-21, PC-05, PC-23, PC-20) and a FAD-dependent monooxygenase (PC-14) are required for the transformation of PC-M4 to penitrems A and E. Synthesis of these final products is proposed to proceed via penitrems D and C (PC-21, PC-05, PC-14) and penitrems B and F (PC-21, PC-05, PC-14, PC-23). The sequence is that of Prenyl transferase penC from Penicillium crustosum (Blue mold fungus).